Reading from the N-terminus, the 385-residue chain is Probable splicing factor YJU2B (385 aa).

Residues 1-26 form a disordered region; the sequence is MGERKGQNKYYPPDFNPEKHGSLNRY. Serine 40 is subject to Phosphoserine. Positions 182–214 form a coiled coil; sequence LNSMLRRHFREKKKAMQEEEEKDQALQAKASLA. Positions 257–385 are disordered; sequence PSAQGPSASS…VADYSDSESE (129 aa). The span at 258–271 shows a compositional bias: low complexity; that stretch reads SAQGPSASSSKASS. Serine 306 is modified (phosphoserine). Over residues 359-373 the composition is skewed to polar residues; it reads GSSQEDLLNPNTPNA.

It belongs to the CWC16 family.

Its subcellular location is the nucleus. May be involved in mRNA splicing. This chain is Probable splicing factor YJU2B (Yju2b), found in Mus musculus (Mouse).